The primary structure comprises 144 residues: Snaclec trimecetin subunit beta (144 aa).

Positions 1–23 are cleaved as a signal peptide; that stretch reads MGRFIFVSFGLLVVFLSLSGTAA. Intrachain disulfides connect cysteine 25–cysteine 36, cysteine 53–cysteine 142, and cysteine 119–cysteine 134. One can recognise a C-type lectin domain in the interval 32 to 143; that stretch reads FRRYCYQVFQ…CSSKRYVVCK (112 aa).

It belongs to the snaclec family. Heterodimer of subunits alpha and beta; disulfide-linked. Expressed by the venom gland.

Its subcellular location is the secreted. Snaclec that induces platelet aggregation in either human platelet rich plasma (PRP) or washed platelet suspensions. It causes aggregation in a dose-dependent manner even in the absence of various platelet agonists such as ADP or von Willebrand factor (vWF). Interestingly, it does not induce aggregation in rabbit PRP. A monoclonal antibody against the platelet GPIb receptor blocks the aggregation induced by trimecetin, suggesting that it acts by binding to GPIb (GP1BA/GP1BB). The polypeptide is Snaclec trimecetin subunit beta (Protobothrops mucrosquamatus (Taiwan habu)).